The following is a 131-amino-acid chain: Large ribosomal subunit protein bL12 (131 aa).

The protein belongs to the bacterial ribosomal protein bL12 family. In terms of assembly, homodimer. Part of the ribosomal stalk of the 50S ribosomal subunit. Forms a multimeric L10(L12)X complex, where L10 forms an elongated spine to which 2 to 4 L12 dimers bind in a sequential fashion. Binds GTP-bound translation factors.

Its function is as follows. Forms part of the ribosomal stalk which helps the ribosome interact with GTP-bound translation factors. Is thus essential for accurate translation. The sequence is that of Large ribosomal subunit protein bL12 from Nocardioides sp. (strain ATCC BAA-499 / JS614).